Here is a 284-residue protein sequence, read N- to C-terminus: AA14 family lytic polysaccharide monooxygenase B (284 aa).

The N-terminal stretch at 1-20 (MGYLSKLVTSVVFAIPLASA) is a signal peptide. N-linked (GlcNAc...) asparagine glycans are attached at residues asparagine 42, asparagine 96, asparagine 142, and asparagine 183. An intrachain disulfide couples cysteine 197 to cysteine 218.

Belongs to the polysaccharide monooxygenase AA14 family. It depends on Cu(2+) as a cofactor.

It is found in the secreted. Functionally, lytic polysaccharide monooxygenase (LPMO) that plays decomposes some specific network structures formed between cellulose and hemicellulose in the plant cell walls. Catalysis by LPMOs requires the reduction of the active-site copper from Cu(II) to Cu(I) by a reducing agent and H(2)O(2) or O(2) as a cosubstrate. This Talaromyces rugulosus (Penicillium rugulosum) protein is AA14 family lytic polysaccharide monooxygenase B.